A 249-amino-acid chain; its full sequence is Small ribosomal subunit protein eS6 (249 aa).

A Glycyl lysine isopeptide (Lys-Gly) (interchain with G-Cter in SUMO2) cross-link involves residue K14. Position 35 is an ADP-ribosyl glutamic acid (E35). At R137 the chain carries (3R)-3-hydroxyarginine. S148 is modified (phosphoserine). K211 carries the N6-acetyllysine modification. Residues M217–A229 show a composition bias toward basic and acidic residues. Residues M217–K249 form a disordered region. Phosphoserine occurs at positions 235, 236, 240, 242, 244, and 247. Residues S236–K249 are compositionally biased toward low complexity.

It belongs to the eukaryotic ribosomal protein eS6 family. Component of the small ribosomal subunit. Part of the small subunit (SSU) processome, composed of more than 70 proteins and the RNA chaperone small nucleolar RNA (snoRNA) U3. Ribosomal protein S6 is the major substrate of protein kinases in eukaryote ribosomes. The phosphorylation is stimulated by growth factors, tumor promoting agents, and mitogens. It is dephosphorylated at growth arrest. Phosphorylated at Ser-235 and Ser-236 by RPS6KA1 and RPS6KA3; phosphorylation at these sites facilitates the assembly of the pre-initiation complex. Post-translationally, specifically hydroxylated (with R stereochemistry) at C-3 of Arg-137 by KDM8. In terms of processing, mono-ADP-ribosylation at Glu-35 by PARP16 inhibits polysome assembly and mRNA loading, thereby inhibiting protein translation.

It is found in the cytoplasm. The protein resides in the nucleus. The protein localises to the nucleolus. Component of the 40S small ribosomal subunit. Plays an important role in controlling cell growth and proliferation through the selective translation of particular classes of mRNA. Part of the small subunit (SSU) processome, first precursor of the small eukaryotic ribosomal subunit. During the assembly of the SSU processome in the nucleolus, many ribosome biogenesis factors, an RNA chaperone and ribosomal proteins associate with the nascent pre-rRNA and work in concert to generate RNA folding, modifications, rearrangements and cleavage as well as targeted degradation of pre-ribosomal RNA by the RNA exosome. This is Small ribosomal subunit protein eS6 (RPS6) from Oryctolagus cuniculus (Rabbit).